The chain runs to 395 residues: Elongation factor Tu (395 aa).

The 196-residue stretch at Lys10–Arg205 folds into the tr-type G domain. Residues Gly19–Thr26 are G1. Residue Gly19–Thr26 coordinates GTP. Thr26 lines the Mg(2+) pocket. The segment at Gly60–Asn64 is G2. A G3 region spans residues Asp81–Gly84. Residues Asp81–His85 and Asn136–Asp139 each bind GTP. The tract at residues Asn136 to Asp139 is G4. The tract at residues Ser174–Thr176 is G5.

The protein belongs to the TRAFAC class translation factor GTPase superfamily. Classic translation factor GTPase family. EF-Tu/EF-1A subfamily. Monomer.

The protein localises to the cytoplasm. The enzyme catalyses GTP + H2O = GDP + phosphate + H(+). Functionally, GTP hydrolase that promotes the GTP-dependent binding of aminoacyl-tRNA to the A-site of ribosomes during protein biosynthesis. The sequence is that of Elongation factor Tu from Terrimonas ferruginea (Flavobacterium ferrugineum).